A 345-amino-acid polypeptide reads, in one-letter code: MSTPTPLSYKDAGVDIDAGNALVSNIKAAVKRTRRPEVMGNLGGFGALCEIPTKYKQPVLVSGTDGVGTKLRLAIDYKKHDTVGIDLVAMCVNDLIVQGAEPLFFLDYYATGKLDVETATSVVNGIGEGCFQSGCALIGGETAEMPGMYEGEDYDLAGFCVGVVEKADIIDGSKVAAGDALIALASSGPHSNGYSLVRKVLEVSQADPQQDLNGKPLIEHLLEPTKIYVKSLLKLIAASDVHAMAHITGGGFWENIPRVLPDNLKAVIQGDSWQWPAVFSWLMENGNIAEYEMYRTFNCGVGMLVALPADKVDAALALLAAEGEQAWLIGAIADREGNEEQVEIL.

It belongs to the AIR synthase family.

The protein resides in the cytoplasm. The enzyme catalyses 2-formamido-N(1)-(5-O-phospho-beta-D-ribosyl)acetamidine + ATP = 5-amino-1-(5-phospho-beta-D-ribosyl)imidazole + ADP + phosphate + H(+). It functions in the pathway purine metabolism; IMP biosynthesis via de novo pathway; 5-amino-1-(5-phospho-D-ribosyl)imidazole from N(2)-formyl-N(1)-(5-phospho-D-ribosyl)glycinamide: step 2/2. The protein is Phosphoribosylformylglycinamidine cyclo-ligase of Shewanella baltica (strain OS223).